A 106-amino-acid chain; its full sequence is Transcriptional and immune response regulator (106 aa).

As to quaternary structure, monomer. Interacts with NOTCH2 (via ANK repeats), the interaction inhibits the nuclear translocation of NOTCH2 N2ICD. Interacts (C-terminus) with CBY1 (C-terminus), TCIM competes with CTNNB1 for the interaction with CBY1.

It localises to the cytoplasm. Its subcellular location is the nucleus. The protein localises to the nucleolus. It is found in the nucleus speckle. Its function is as follows. Seems to be involved in the regulation of cell growth an differentiation, may play different and opposite roles depending on the tissue or cell type. May enhance the WNT-CTNNB1 pathway by relieving antagonistic activity of CBY1. Enhances the proliferation of follicular dendritic cells. Plays a role in the mitogen-activated MAPK2/3 signaling pathway, positively regulates G1-to-S-phase transition of the cell cycle. In endothelial cells, enhances key inflammatory mediators and inflammatory response through the modulation of NF-kappaB transcriptional regulatory activity. Involved in the regulation of heat shock response, seems to play a positive feedback with HSF1 to modulate heat-shock downstream gene expression. Plays a role in the regulation of hematopoiesis even if the mechanisms are unknown. In cancers such as thyroid or lung cancer, it has been described as promoter of cell proliferation, G1-to-S-phase transition and inhibitor of apoptosis. However, it negatively regulates self-renewal of liver cancer cells via suppresion of NOTCH2 signaling. This is Transcriptional and immune response regulator (TCIM) from Bos taurus (Bovine).